The sequence spans 226 residues: ATP synthase F(0) complex subunit a (226 aa).

Transmembrane regions (helical) follow at residues 11 to 31 (APSMMGLPIVVLIVMFPSILF), 68 to 88 (WALMLMSLILFIGSTNLLGLL), 97 to 117 (QLSMNLGMAIPLWAGTVITGF), 138 to 158 (IPMLVVIETISLFIQPMALAV), 164 to 184 (ITAGHLLIHLIGGATLALINI), and 189 to 209 (AFITFIILILLTILEFAVALI).

This sequence belongs to the ATPase A chain family. In terms of assembly, component of the ATP synthase complex composed at least of ATP5F1A/subunit alpha, ATP5F1B/subunit beta, ATP5MC1/subunit c (homooctomer), MT-ATP6/subunit a, MT-ATP8/subunit 8, ATP5ME/subunit e, ATP5MF/subunit f, ATP5MG/subunit g, ATP5MK/subunit k, ATP5MJ/subunit j, ATP5F1C/subunit gamma, ATP5F1D/subunit delta, ATP5F1E/subunit epsilon, ATP5PF/subunit F6, ATP5PB/subunit b, ATP5PD/subunit d, ATP5PO/subunit OSCP. ATP synthase complex consists of a soluble F(1) head domain (subunits alpha(3) and beta(3)) - the catalytic core - and a membrane F(0) domain - the membrane proton channel (subunits c, a, 8, e, f, g, k and j). These two domains are linked by a central stalk (subunits gamma, delta, and epsilon) rotating inside the F1 region and a stationary peripheral stalk (subunits F6, b, d, and OSCP). Interacts with DNAJC30; interaction is direct.

It is found in the mitochondrion inner membrane. It carries out the reaction H(+)(in) = H(+)(out). Its function is as follows. Subunit a, of the mitochondrial membrane ATP synthase complex (F(1)F(0) ATP synthase or Complex V) that produces ATP from ADP in the presence of a proton gradient across the membrane which is generated by electron transport complexes of the respiratory chain. ATP synthase complex consist of a soluble F(1) head domain - the catalytic core - and a membrane F(1) domain - the membrane proton channel. These two domains are linked by a central stalk rotating inside the F(1) region and a stationary peripheral stalk. During catalysis, ATP synthesis in the catalytic domain of F(1) is coupled via a rotary mechanism of the central stalk subunits to proton translocation. With the subunit c (ATP5MC1), forms the proton-conducting channel in the F(0) domain, that contains two crucial half-channels (inlet and outlet) that facilitate proton movement from the mitochondrial intermembrane space (IMS) into the matrix. Protons are taken up via the inlet half-channel and released through the outlet half-channel, following a Grotthuss mechanism. The polypeptide is ATP synthase F(0) complex subunit a (Canis lupus familiaris (Dog)).